Reading from the N-terminus, the 331-residue chain is DNA-directed RNA polymerase subunit alpha (331 aa).

The tract at residues 1–230 (MKNIKTSPYI…KQMSVFNSEW (230 aa)) is alpha N-terminal domain (alpha-NTD). The tract at residues 247–331 (LKPLLQKIEA…ALQKRLNKLK (85 aa)) is alpha C-terminal domain (alpha-CTD).

It belongs to the RNA polymerase alpha chain family. As to quaternary structure, homodimer. The RNAP catalytic core consists of 2 alpha, 1 beta/beta' and 1 omega subunit. When a sigma factor is associated with the core the holoenzyme is formed, which can initiate transcription.

The catalysed reaction is RNA(n) + a ribonucleoside 5'-triphosphate = RNA(n+1) + diphosphate. DNA-dependent RNA polymerase catalyzes the transcription of DNA into RNA using the four ribonucleoside triphosphates as substrates. This is DNA-directed RNA polymerase subunit alpha from Wolinella succinogenes (strain ATCC 29543 / DSM 1740 / CCUG 13145 / JCM 31913 / LMG 7466 / NCTC 11488 / FDC 602W) (Vibrio succinogenes).